Here is a 182-residue protein sequence, read N- to C-terminus: Oligoribonuclease (182 aa).

An Exonuclease domain is found at 8-171 (LIWLDMEMTG…ADIHESIGEL (164 aa)). Tyr-129 is a catalytic residue.

It belongs to the oligoribonuclease family.

Its subcellular location is the cytoplasm. 3'-to-5' exoribonuclease specific for small oligoribonucleotides. The sequence is that of Oligoribonuclease from Azoarcus sp. (strain BH72).